The sequence spans 406 residues: Argininosuccinate synthase (406 aa).

ATP contacts are provided by residues 12 to 20 (AYSGGLDTS) and Ala-39. L-citrulline-binding residues include Tyr-90 and Ser-95. Gly-120 contributes to the ATP binding site. Residues Thr-122, Asn-126, and Asp-127 each coordinate L-aspartate. Asn-126 lines the L-citrulline pocket. The L-citrulline site is built by Arg-130, Ser-179, Ser-188, Glu-264, and Tyr-276.

Belongs to the argininosuccinate synthase family. Type 1 subfamily. Homotetramer.

The protein localises to the cytoplasm. It carries out the reaction L-citrulline + L-aspartate + ATP = 2-(N(omega)-L-arginino)succinate + AMP + diphosphate + H(+). It participates in amino-acid biosynthesis; L-arginine biosynthesis; L-arginine from L-ornithine and carbamoyl phosphate: step 2/3. The polypeptide is Argininosuccinate synthase (Geotalea uraniireducens (strain Rf4) (Geobacter uraniireducens)).